The chain runs to 226 residues: Membrane protein (226 aa).

Topologically, residues 1–11 are virion surface; sequence MSNGSIPVDEV. The helical transmembrane segment at 12–32 threads the bilayer; sequence IEHLRNWNFTWNIILTILLVV. The Intravirion portion of the chain corresponds to 33–41; that stretch reads LQYGHYKYS. A helical transmembrane segment spans residues 42–62; that stretch reads VFLYGVKMAILWILWPLVLAL. The Virion surface portion of the chain corresponds to 63–75; that stretch reads SLFDAWASFQVNW. The helical transmembrane segment at 76–96 threads the bilayer; the sequence is VFFAFSILMACITLMLWIMYF. Residues 97–226 are Intravirion-facing; that stretch reads VNSIRLWRRT…TDSEKVPHLV (130 aa). An interaction with N protein region spans residues 200–216; the sequence is RSKHGDYSAVSNPSAVL.

This sequence belongs to the alphacoronaviruses M protein family. Homomultimer. Interacts with envelope E protein in the budding compartment of the host cell, which is located between endoplasmic reticulum and the Golgi complex. Forms a complex with HE and S proteins. Interacts with nucleocapsid N protein. This interaction probably participates in RNA packaging into the virus.

It is found in the virion membrane. Its subcellular location is the host Golgi apparatus membrane. Its function is as follows. Component of the viral envelope that plays a central role in virus morphogenesis and assembly via its interactions with other viral proteins. In Sus scrofa (Pig), this protein is Membrane protein.